We begin with the raw amino-acid sequence, 455 residues long: Keratin, type I cuticular Ha5 (455 aa).

Residues 1-97 are head; it reads MASKCLKASF…FGEGILTGNE (97 aa). An IF rod domain is found at 97-408; sequence EKETMQFLND…GLLDSEDCKL (312 aa). A coil 1A region spans residues 98 to 132; that stretch reads KETMQFLNDRLASYLEKVRQLERENAELESRIRDW. A linker 1 region spans residues 133-143; that stretch reads CEQQVPYLCPD. Residues 144–244 form a coil 1B region; that stretch reads YQSYFQTIEE…HEEEVNSLRC (101 aa). Positions 245–260 are linker 12; the sequence is QLGDRLNVEVDAAPPV. Residues 261–404 form a coil 2 region; sequence DLNRVLNEMR…STYRGLLDSE (144 aa). Positions 405 to 455 are tail; it reads DCKLPCNPCAPDHSPSKSCLPCLPAASCGPGTAHTTCSPRPICVSCPGSRF.

Belongs to the intermediate filament family.

The sequence is that of Keratin, type I cuticular Ha5 from Ovis aries (Sheep).